The primary structure comprises 364 residues: Fructose-bisphosphate aldolase B (364 aa).

Alanine 2 bears the N-acetylalanine mark. At lysine 13 the chain carries N6-succinyllysine. Serine 36 is modified (phosphoserine). Threonine 39 carries the post-translational modification Phosphothreonine. Arginine 43 serves as a coordination point for beta-D-fructose 1,6-bisphosphate. Phosphoserine is present on serine 89. Threonine 119 is subject to Phosphothreonine. Residue lysine 121 is modified to N6-succinyllysine. Position 132 is a phosphoserine (serine 132). The Proton acceptor role is filled by glutamate 188. Residue serine 206 is modified to Phosphoserine. Lysine 230 serves as the catalytic Schiff-base intermediate with dihydroxyacetone-P. Phosphoserine is present on residues serine 272, serine 276, serine 299, and serine 301. 272–274 (SGG) contributes to the beta-D-fructose 1,6-bisphosphate binding site. Position 304 (arginine 304) interacts with beta-D-fructose 1,6-bisphosphate. Serine 309 carries the post-translational modification Phosphoserine. Lysine 317 carries the N6-succinyllysine modification.

This sequence belongs to the class I fructose-bisphosphate aldolase family. Homotetramer. Interacts with BBS1, BBS2, BBS4 and BBS7. Forms a ternary complex with G6PD and TP53; this interaction is direct.

Its subcellular location is the cytoplasm. The protein resides in the cytosol. The protein localises to the cytoskeleton. It is found in the microtubule organizing center. It localises to the centrosome. Its subcellular location is the centriolar satellite. The enzyme catalyses beta-D-fructose 1,6-bisphosphate = D-glyceraldehyde 3-phosphate + dihydroxyacetone phosphate. It catalyses the reaction beta-D-fructose 1-phosphate = D-glyceraldehyde + dihydroxyacetone phosphate. The protein operates within carbohydrate degradation; glycolysis; D-glyceraldehyde 3-phosphate and glycerone phosphate from D-glucose: step 4/4. Its pathway is carbohydrate biosynthesis; gluconeogenesis. It functions in the pathway carbohydrate metabolism; fructose metabolism. In terms of biological role, catalyzes the aldol cleavage of fructose 1,6-biphosphate to form two triosephosphates dihydroxyacetone phosphate and D-glyceraldehyde 3-phosphate in glycolysis as well as the reverse stereospecific aldol addition reaction in gluconeogenesis. In fructolysis, metabolizes fructose 1-phosphate derived from the phosphorylation of dietary fructose by fructokinase into dihydroxyacetone phosphate and D-glyceraldehyde. Acts as an adapter independently of its enzymatic activity, exerts a tumor suppressor role by stabilizing the ternary complex with G6PD and TP53 to inhibit G6PD activity and keep oxidative pentose phosphate metabolism in check. This chain is Fructose-bisphosphate aldolase B, found in Mus musculus (Mouse).